Reading from the N-terminus, the 89-residue chain is Large ribosomal subunit protein bL27 (89 aa).

Residues 1–21 form a disordered region; the sequence is MAHKKAGGSSRNGRDSESKRL.

This sequence belongs to the bacterial ribosomal protein bL27 family.

This Chelativorans sp. (strain BNC1) protein is Large ribosomal subunit protein bL27.